A 167-amino-acid chain; its full sequence is Putative C-type lectin-like domain family 1 (167 aa).

Residues 1 to 67 lie on the Cytoplasmic side of the membrane; the sequence is MVSNFFHVIQ…KYDCPFSGTS (67 aa). A helical; Signal-anchor for type II membrane protein transmembrane segment spans residues 68-88; sequence FVVFSLFLICAMAGDVVYADI. The Extracellular portion of the chain corresponds to 89–167; that stretch reads KTVRTSPLEL…DITAMVRFNI (79 aa). N-linked (GlcNAc...) asparagine glycans are attached at residues Asn109, Asn140, and Asn149. The 52-residue stretch at 116–167 folds into the C-type lectin; atypical domain; sequence SCPAKDWKVHKGKCYWIAETKKSWNKSQNDCAINNSYLMVIQDITAMVRFNI.

Expressed in spleen, lymph node, and tonsil. Lower expression in peripheral blood, bone marrow, and colon. No expression detected in thymus. Highly expressed in dendritic and B-cells.

The protein localises to the cell membrane. Its function is as follows. May function in mediating immune cell-cell interactions. May act as a T-cell costimulatory molecule, enhancing anti-CD3-induced proliferation. May play a role in the interaction of dendritic cells with T-cells and the cells of the adaptive immune response. This is Putative C-type lectin-like domain family 1 from Homo sapiens (Human).